The chain runs to 360 residues: Phospho-N-acetylmuramoyl-pentapeptide-transferase (360 aa).

The next 10 membrane-spanning stretches (helical) occupy residues 27–47 (IVSLLTALVISLWMGPHMIAW), 73–93 (TMGGVMILVAIIVSVLMWANL), 94–114 (SNPYVWCVLLVLAGYGAVGFV), 132–152 (WKYFWQSVIALVVAFTMYSIG), 168–188 (VMPQLGLLYVALAYFVIVGTS), 199–219 (GLAIMPTVFVAAGFALVAWAT), 236–256 (ASELVIVCTAIVGAGLGFLWF), 263–283 (VFMGDVGSLALGGALGTIAVL), 288–308 (FLLVIMGGVFVVETLSVILQV), and 338–358 (VIVRFWIISLMLVLIGLATLK).

It belongs to the glycosyltransferase 4 family. MraY subfamily. It depends on Mg(2+) as a cofactor.

The protein localises to the cell inner membrane. The catalysed reaction is UDP-N-acetyl-alpha-D-muramoyl-L-alanyl-gamma-D-glutamyl-meso-2,6-diaminopimeloyl-D-alanyl-D-alanine + di-trans,octa-cis-undecaprenyl phosphate = di-trans,octa-cis-undecaprenyl diphospho-N-acetyl-alpha-D-muramoyl-L-alanyl-D-glutamyl-meso-2,6-diaminopimeloyl-D-alanyl-D-alanine + UMP. The protein operates within cell wall biogenesis; peptidoglycan biosynthesis. Functionally, catalyzes the initial step of the lipid cycle reactions in the biosynthesis of the cell wall peptidoglycan: transfers peptidoglycan precursor phospho-MurNAc-pentapeptide from UDP-MurNAc-pentapeptide onto the lipid carrier undecaprenyl phosphate, yielding undecaprenyl-pyrophosphoryl-MurNAc-pentapeptide, known as lipid I. The protein is Phospho-N-acetylmuramoyl-pentapeptide-transferase of Pectobacterium atrosepticum (strain SCRI 1043 / ATCC BAA-672) (Erwinia carotovora subsp. atroseptica).